The primary structure comprises 313 residues: MQFEFQIEELEHKIEELKKFAEEKEVDLSDEIAKLKDQRDIALKVLYDDLTDYQRVMVSRHPERPYTLDYINYITTDFIELHGDRLFRDDPAIVGGLCKIDGKNFMIIGHQKGRTMQEKVFRNFGMANPEGYRKALRLYEMAERFKLPILTFIDTPGAYPGLEAEKHGQGEAIARNLMEMSGIKTPIVSIVIGEGGSGGALGLGVADKVFMLENSVYSVISPEGCAAILYKDPNRVEEAANNLKLSSQSLLKIGLIDGIIDEALGGAHRGPEDTAFNLKNVVLEAVNELEKLPVDELVEKRYEKFRQMGVFNR.

The 255-residue stretch at 34 to 288 folds into the CoA carboxyltransferase C-terminal domain; sequence KLKDQRDIAL…KNVVLEAVNE (255 aa).

It belongs to the AccA family. In terms of assembly, acetyl-CoA carboxylase is a heterohexamer composed of biotin carboxyl carrier protein (AccB), biotin carboxylase (AccC) and two subunits each of ACCase subunit alpha (AccA) and ACCase subunit beta (AccD).

Its subcellular location is the cytoplasm. The enzyme catalyses N(6)-carboxybiotinyl-L-lysyl-[protein] + acetyl-CoA = N(6)-biotinyl-L-lysyl-[protein] + malonyl-CoA. It functions in the pathway lipid metabolism; malonyl-CoA biosynthesis; malonyl-CoA from acetyl-CoA: step 1/1. Functionally, component of the acetyl coenzyme A carboxylase (ACC) complex. First, biotin carboxylase catalyzes the carboxylation of biotin on its carrier protein (BCCP) and then the CO(2) group is transferred by the carboxyltransferase to acetyl-CoA to form malonyl-CoA. The protein is Acetyl-coenzyme A carboxylase carboxyl transferase subunit alpha of Fusobacterium nucleatum subsp. nucleatum (strain ATCC 25586 / DSM 15643 / BCRC 10681 / CIP 101130 / JCM 8532 / KCTC 2640 / LMG 13131 / VPI 4355).